We begin with the raw amino-acid sequence, 283 residues long: DegV domain-containing protein CPE0304 (283 aa).

The DegV domain occupies 3–281 (VKVITDSTSC…VKSVGIAYAR (279 aa)). Hexadecanoate-binding residues include S60 and S92.

Functionally, may bind long-chain fatty acids, such as palmitate, and may play a role in lipid transport or fatty acid metabolism. The protein is DegV domain-containing protein CPE0304 of Clostridium perfringens (strain 13 / Type A).